Consider the following 296-residue polypeptide: Acetyl-coenzyme A carboxylase carboxyl transferase subunit beta (296 aa).

Residues 26–295 (VWTKCTNCEQ…PFKVGELIIE (270 aa)) form the CoA carboxyltransferase N-terminal domain. Zn(2+) contacts are provided by Cys30, Cys33, Cys49, and Cys52. Residues 30-52 (CTNCEQVLYSEELKRNMQVCPKC) form a C4-type zinc finger.

It belongs to the AccD/PCCB family. Acetyl-CoA carboxylase is a heterohexamer composed of biotin carboxyl carrier protein (AccB), biotin carboxylase (AccC) and two subunits each of ACCase subunit alpha (AccA) and ACCase subunit beta (AccD). Zn(2+) serves as cofactor.

The protein localises to the cytoplasm. The enzyme catalyses N(6)-carboxybiotinyl-L-lysyl-[protein] + acetyl-CoA = N(6)-biotinyl-L-lysyl-[protein] + malonyl-CoA. The protein operates within lipid metabolism; malonyl-CoA biosynthesis; malonyl-CoA from acetyl-CoA: step 1/1. Its function is as follows. Component of the acetyl coenzyme A carboxylase (ACC) complex. Biotin carboxylase (BC) catalyzes the carboxylation of biotin on its carrier protein (BCCP) and then the CO(2) group is transferred by the transcarboxylase to acetyl-CoA to form malonyl-CoA. The polypeptide is Acetyl-coenzyme A carboxylase carboxyl transferase subunit beta (Haemophilus ducreyi (strain 35000HP / ATCC 700724)).